Here is a 489-residue protein sequence, read N- to C-terminus: Cytochrome P450 monooxygenase ataF (489 aa).

A helical membrane pass occupies residues 12-32 (WLEHSAVIATLFAFGTALFLV). Asn-289 carries N-linked (GlcNAc...) asparagine glycosylation. Cys-434 contacts heme.

This sequence belongs to the cytochrome P450 family. Heme serves as cofactor.

It is found in the membrane. Its pathway is mycotoxin biosynthesis. Functionally, cytochrome P450 monooxygenase; part of the gene cluster that mediates the biosynthesis of acetylaranotin, a member of the epipolythiodioxopiperazine (ETP) class of toxins characterized by a disulfide-bridged cyclic dipeptide. The first step of acetylaranotin biosynthesis is performed by the NRPS ataP which produces diketopiperazine cyclo-L-Phe-L-Phe via the condensation of 2 phenylalanines (L-Phe). The ataC domain of ataTC then catalyzes the formation of bishydroxylation of cyclo-L-Phe-L-Phe. The glutathione S-transferase domain ataG in ataIMG further catalyzes the conjugation of two glutathiones to the bishydroxylated intermediate. Next, the dipeptidase ataJ removes the Glu residues. The following step is performed by the carbon sulfur lyase domain ataI of ataIMG which may convert the bis-cysteinyl adduct to yield an epidithiol intermediate. The ataT domain from ataTC then catalyzes the oxidation of the free dithiols, followed by a cyclization step catalyzed by the cytochrome P450 ataF. AtaF probably acts as an epoxidase to promote a dual epoxidation formation at C8 and C9 along with C8' and C9', followed by the spontaneous nucleophilic attack of the amide nitrogens N10 and N10' to yield an intermediate with the pyrrolidine partial structure. The final steps of acetylaranotin biosynthesis involve the acetylation and ring rearrangement of an epitetrathiodiketopiperazine intermediate to produce acetylaranotin. AtaH probably catalyzes the acetylation of epitetrathiodiketopiperazine to produce a diacetate and ataY is responsible for the formation of the dihydrooxepin moiety that converts the diacetate intermediate to acetylaranotin via acetylapoaranotin. Both enzymes could function independently in the absence of the other. The acetylaranotin bis-thiomethyltransferase ataS located outside of acetylaranotin gene cluster is the main thiomethyltransferase responsible for converting acetylaranotin and its related intermediates to their methylated forms. The protein is Cytochrome P450 monooxygenase ataF of Aspergillus terreus (strain NIH 2624 / FGSC A1156).